We begin with the raw amino-acid sequence, 143 residues long: Ninjurin-2 (143 aa).

Over 1-61 (MESDRETIHL…KSVLQQGPFA (61 aa)) the chain is Extracellular. Residues 26 to 38 (NFYATKKSVAESM) form a helix alpha1 region. The segment at 39–58 (LDVALFMSNAMRLKSVLQQG) is helix alpha2. A helical membrane pass occupies residues 62 to 93 (EYYTTLVTLIIVSLLLQVVISLLLVFIAILNL). Topologically, residues 94–97 (NEVE) are cytoplasmic. The chain crosses the membrane as a helical span at residues 98–127 (NQRHLNKLNNAATILVFITVVINIFITAFG). Lys104 provides a ligand contact to cholesterol. Topologically, residues 128 to 143 (AHHAASMAARTSSNPI) are extracellular.

The protein belongs to the ninjurin family. As to quaternary structure, homooligomer; in response to stimuli, homooligomerizes into filaments. In contrast to NINJ1, the filament is curved toward the intracellular space, preventing its circularization on a relatively flat membrane to mediate plasma membrane rupture: curvature is caused by cholesterol-binding at the cytoplasmic leaflet.

Its subcellular location is the cell membrane. Functionally, its role in unclear. In contrast to NINJ1 paralog, does not mediate plasma membrane rupture (cytolysis) downstream of necroptotic and pyroptotic programmed cell death. While it is able to oligomerize and form filaments, filaments are curved toward the intracellular space, preventing circularization to mediate plasma membrane rupture. May act as a homophilic transmembrane adhesion molecule involved in nerve regeneration. Promotes axonal growth. This chain is Ninjurin-2 (Ninj2), found in Mus musculus (Mouse).